We begin with the raw amino-acid sequence, 105 residues long: Urease subunit gamma (105 aa).

It belongs to the urease gamma subunit family. As to quaternary structure, heterotrimer of UreA (gamma), UreB (beta) and UreC (alpha) subunits. Three heterotrimers associate to form the active enzyme.

The protein resides in the cytoplasm. It catalyses the reaction urea + 2 H2O + H(+) = hydrogencarbonate + 2 NH4(+). It functions in the pathway nitrogen metabolism; urea degradation; CO(2) and NH(3) from urea (urease route): step 1/1. The protein is Urease subunit gamma of Bacillus subtilis (strain 168).